Here is a 227-residue protein sequence, read N- to C-terminus: AN1-type zinc finger protein 3 (227 aa).

Residues 12–44 (PSLPPRCPCGFWGSSKTMNLCSKCFADFQKKQP) form an A20-type zinc finger. 4 residues coordinate Zn(2+): Cys18, Cys20, Cys32, and Cys35. 2 disordered regions span residues 41-99 (KKQP…TEEC) and 113-151 (PTKR…RSKQ). 2 stretches are compositionally biased toward low complexity: residues 49 to 59 (TPSTSNSQSDL) and 66 to 77 (SDNNNTSVTTPT). 2 stretches are compositionally biased toward polar residues: residues 78 to 96 (LSPS…SPST) and 113 to 127 (PTKR…SENE). Positions 135-148 (RLVENPERPEESGR) are enriched in basic and acidic residues. The AN1-type zinc-finger motif lies at 151–200 (QKSRRRCFQCQTKLELVQQELGSCRCGYVFCMLHRLPEQHDCTFDHMGRG). 8 residues coordinate Zn(2+): Cys157, Cys160, Cys174, Cys176, Cys181, His184, His190, and Cys192.

In terms of tissue distribution, expressed in testis.

In Mus musculus (Mouse), this protein is AN1-type zinc finger protein 3 (Zfand3).